The primary structure comprises 627 residues: CTP synthase (627 aa).

The Glutamine amidotransferase type-1 domain maps to 300-554; sequence CIAVVGKYTK…LASVDRLNQY (255 aa). Catalysis depends on for GATase activity residues Cys-399, His-526, and Glu-528. Residues Ser-567, Ser-570, Ser-571, and Ser-588 each carry the phosphoserine modification. Thr-595 is subject to Phosphothreonine. The span at 599 to 613 shows a compositional bias: polar residues; it reads GISKSCNGSISTSDS. The disordered stretch occupies residues 599 to 627; the sequence is GISKSCNGSISTSDSEGACGGVDPTNGHK.

It belongs to the CTP synthase family. In terms of tissue distribution, in ovary, expressed in oocytes, follicle cells and nurse cells. Also expressed in larval and adult testis (at protein level). In larvae, expressed in lymph gland, salivary gland, regions of the midgut, testis, optical lobe and trachea. Isoform 1 is expressed in adult testis, ovary, accessory gland and head. Isoform 2 is weakly expressed in ovary.

It is found in the cytoplasm. The catalysed reaction is UTP + L-glutamine + ATP + H2O = CTP + L-glutamate + ADP + phosphate + 2 H(+). It functions in the pathway pyrimidine metabolism; CTP biosynthesis via de novo pathway; CTP from UDP: step 2/2. Its function is as follows. Catalyzes the ATP-dependent amination of UTP to CTP with either L-glutamine or ammonia as the source of nitrogen. Constitutes the rate-limiting enzyme in the synthesis of cytosine nucleotides. In terms of biological role, required for assembly of cytoophidium in female germline cells. In nurse cells, CTPsyn filament assembly in the cytoophidium is regulated by Ack kinase which may thereby contribute to the control of CTP production at specific stages of oogenesis and development of the nurse cell membrane. This is CTP synthase from Drosophila melanogaster (Fruit fly).